We begin with the raw amino-acid sequence, 310 residues long: DnaJ-like protein MG002 (310 aa).

Positions 1–66 constitute a J domain; that stretch reads MNLYDLLELP…KEKYDSMLKV (66 aa).

This chain is DnaJ-like protein MG002, found in Mycoplasma genitalium (strain ATCC 33530 / DSM 19775 / NCTC 10195 / G37) (Mycoplasmoides genitalium).